The primary structure comprises 500 residues: Maturase K (500 aa).

The protein belongs to the intron maturase 2 family. MatK subfamily.

The protein resides in the plastid. It is found in the chloroplast. Functionally, usually encoded in the trnK tRNA gene intron. Probably assists in splicing its own and other chloroplast group II introns. The polypeptide is Maturase K (Adiantum capillus-veneris (Maidenhair fern)).